A 419-amino-acid chain; its full sequence is L-rhamnose isomerase (419 aa).

3 residues coordinate Mn(2+): H262, D294, and D296.

This sequence belongs to the rhamnose isomerase family. Homotetramer. Requires Mn(2+) as cofactor.

The protein resides in the cytoplasm. It catalyses the reaction L-rhamnopyranose = L-rhamnulose. It participates in carbohydrate degradation; L-rhamnose degradation; glycerone phosphate from L-rhamnose: step 1/3. Functionally, catalyzes the interconversion of L-rhamnose and L-rhamnulose. The sequence is that of L-rhamnose isomerase from Escherichia coli O127:H6 (strain E2348/69 / EPEC).